We begin with the raw amino-acid sequence, 842 residues long: Protein P (842 aa).

The interval 1-177 is terminal protein domain (TP); the sequence is MPLSYQHFRR…FCGSPYTWEQ (177 aa). A spacer region spans residues 178-345; sequence DLQHGAFLDG…YCLSHLVNLL (168 aa). The interval 184–238 is disordered; that stretch reads FLDGPSRVGKEPFRQQSSRIPSRSPVGPSIQSKYQQSRLGLQSQKGPLARGQQGR. The segment covering 197 to 208 has biased composition (low complexity); sequence RQQSSRIPSRSP. The span at 212-228 shows a compositional bias: polar residues; it reads SIQSKYQQSRLGLQSQK. Positions 346-689 are polymerase/reverse transcriptase domain (RT); the sequence is QDWGPCTEHG…YMNLYPVARQ (344 aa). The 244-residue stretch at 356–599 folds into the Reverse transcriptase domain; that stretch reads EHHIRIPRTP…YSLNFMGYVI (244 aa). Asp-428, Asp-550, and Asp-551 together coordinate Mg(2+).

The protein belongs to the hepadnaviridae P protein family.

It catalyses the reaction DNA(n) + a 2'-deoxyribonucleoside 5'-triphosphate = DNA(n+1) + diphosphate. It carries out the reaction Endonucleolytic cleavage to 5'-phosphomonoester.. Activated by host HSP70 and HSP40 in vitro to be able to bind the epsilon loop of the pgRNA. Because deletion of the RNase H region renders the protein partly chaperone-independent, the chaperones may be needed indirectly to relieve occlusion of the RNA-binding site by this domain. Inhibited by several reverse-transcriptase inhibitors: Lamivudine, Adefovir and Entecavir. In terms of biological role, multifunctional enzyme that converts the viral RNA genome into dsDNA in viral cytoplasmic capsids. This enzyme displays a DNA polymerase activity that can copy either DNA or RNA templates, and a ribonuclease H (RNase H) activity that cleaves the RNA strand of RNA-DNA heteroduplexes in a partially processive 3'- to 5'-endonucleasic mode. Neo-synthesized pregenomic RNA (pgRNA) are encapsidated together with the P protein, and reverse-transcribed inside the nucleocapsid. Initiation of reverse-transcription occurs first by binding the epsilon loop on the pgRNA genome, and is initiated by protein priming, thereby the 5'-end of (-)DNA is covalently linked to P protein. Partial (+)DNA is synthesized from the (-)DNA template and generates the relaxed circular DNA (RC-DNA) genome. After budding and infection, the RC-DNA migrates in the nucleus, and is converted into a plasmid-like covalently closed circular DNA (cccDNA). The activity of P protein does not seem to be necessary for cccDNA generation, and is presumably released from (+)DNA by host nuclear DNA repair machinery. The polypeptide is Protein P (Hepatitis B virus genotype G (isolate IG29227/2000) (HBV-G)).